Here is a 255-residue protein sequence, read N- to C-terminus: MWIGIISLFPEMFRAITDYGVTGRAVKNGLLSIQSWSPRDFTHDRHRTVDDRPYGGGPGMLMMVQPLRDAIHAAKAAAGEGAKVIYLSPQGRKLDQAGVSELATNQKLILVCGRYEGIDERVIQTEIDEEWSIGDYVLSGGELPAMTLIDSVSRFIPGVLGHEASATEDSFAEGLLDCPHYTRPEVLEGMEVPPVLLSGNHAEIRRWRLKQSLGRTWLRRPELLENLALTEEQARLLAEFKKEHAQQQHKHDGMA.

Residues Gly-113 and 133 to 138 (IGDYVL) each bind S-adenosyl-L-methionine.

This sequence belongs to the RNA methyltransferase TrmD family. As to quaternary structure, homodimer.

The protein localises to the cytoplasm. The catalysed reaction is guanosine(37) in tRNA + S-adenosyl-L-methionine = N(1)-methylguanosine(37) in tRNA + S-adenosyl-L-homocysteine + H(+). Functionally, specifically methylates guanosine-37 in various tRNAs. In Escherichia fergusonii (strain ATCC 35469 / DSM 13698 / CCUG 18766 / IAM 14443 / JCM 21226 / LMG 7866 / NBRC 102419 / NCTC 12128 / CDC 0568-73), this protein is tRNA (guanine-N(1)-)-methyltransferase.